A 263-amino-acid chain; its full sequence is MPEGPEIRRAADNLEAAIKGKPLTDVWFAFAQLKPYESQLTGQLVTRIETRGKALLTHFSNGLTLYSHNQLYGVWRVIDTGEIPQTTRILRVRLQTADKTILLYSASDIEMLTAEQLTTHPFLQRVGPDVLDARLTPEEVKARLLSPRFRNRQFSGLLLDQAFLAGLGNYLRVEILWQVGLTGQHKAKDLNEAQLNALSHALLDIPRLSYTTRGQADENKHHGALFRFKVFHRDGEACERCGGIIEKTTLSSRPFYWCPHCQK.

Pro-2 serves as the catalytic Schiff-base intermediate with DNA. Glu-3 acts as the Proton donor in catalysis. Lys-53 functions as the Proton donor; for beta-elimination activity in the catalytic mechanism. Residues Gln-70, Arg-125, and Asn-169 each coordinate DNA. An FPG-type zinc finger spans residues 229–263; sequence KVFHRDGEACERCGGIIEKTTLSSRPFYWCPHCQK. Catalysis depends on Arg-253, which acts as the Proton donor; for delta-elimination activity.

The protein belongs to the FPG family. Zn(2+) serves as cofactor.

The enzyme catalyses 2'-deoxyribonucleotide-(2'-deoxyribose 5'-phosphate)-2'-deoxyribonucleotide-DNA = a 3'-end 2'-deoxyribonucleotide-(2,3-dehydro-2,3-deoxyribose 5'-phosphate)-DNA + a 5'-end 5'-phospho-2'-deoxyribonucleoside-DNA + H(+). Its function is as follows. Involved in base excision repair of DNA damaged by oxidation or by mutagenic agents. Acts as a DNA glycosylase that recognizes and removes damaged bases. Has a preference for oxidized pyrimidines, such as thymine glycol, 5,6-dihydrouracil and 5,6-dihydrothymine. Has AP (apurinic/apyrimidinic) lyase activity and introduces nicks in the DNA strand. Cleaves the DNA backbone by beta-delta elimination to generate a single-strand break at the site of the removed base with both 3'- and 5'-phosphates. This chain is Endonuclease 8, found in Salmonella heidelberg (strain SL476).